The following is a 675-amino-acid chain: Acetyl-coenzyme A synthetase 1 (675 aa).

Positions 1 to 10 are enriched in polar residues; it reads MPESTQQSHL. Residues 1–32 are disordered; the sequence is MPESTQQSHLSLDHEKMQQPPKGFTERSKTKP. CoA is bound by residues 212-215 and Thr-331; that span reads RGGK. ATP is bound by residues 407-409, 431-436, Asp-522, and Arg-537; these read GEP and DTYWQT. Residue Ser-545 coordinates CoA. Arg-548 is a binding site for ATP. Arg-609 contributes to the CoA binding site.

The protein belongs to the ATP-dependent AMP-binding enzyme family.

The enzyme catalyses acetate + ATP + CoA = acetyl-CoA + AMP + diphosphate. The sequence is that of Acetyl-coenzyme A synthetase 1 (ACS1) from Candida albicans (Yeast).